Reading from the N-terminus, the 378-residue chain is Putative glutamate--cysteine ligase 2 (378 aa).

It belongs to the glutamate--cysteine ligase type 2 family. YbdK subfamily.

The enzyme catalyses L-cysteine + L-glutamate + ATP = gamma-L-glutamyl-L-cysteine + ADP + phosphate + H(+). ATP-dependent carboxylate-amine ligase which exhibits weak glutamate--cysteine ligase activity. This chain is Putative glutamate--cysteine ligase 2, found in Ectopseudomonas mendocina (strain ymp) (Pseudomonas mendocina).